The primary structure comprises 352 residues: B1 bradykinin receptor (352 aa).

Topologically, residues 1 to 41 are extracellular; that stretch reads MASWPPLQLQSSNQSQLFPQNATACDNAPEAWDLLHRVLPT. Asn13 and Asn21 each carry an N-linked (GlcNAc...) asparagine glycan. The helical transmembrane segment at 42-62 threads the bilayer; it reads FIISICSFGLLGNLFVLLVFL. Residues 63 to 72 are Cytoplasmic-facing; the sequence is LPRRRLNVAE. The helical transmembrane segment at 73 to 93 threads the bilayer; sequence IYLANLAASDLVFVLGLPFWA. Residues 94-110 lie on the Extracellular side of the membrane; that stretch reads ENIWNQFNWPFGALLCR. Cys109 and Cys188 form a disulfide bridge. The chain crosses the membrane as a helical span at residues 111-131; sequence VINGIIKANLFISIFLVVAIS. Residues 132–153 are Cytoplasmic-facing; it reads QDRYCVLVHPMASRRRQRRRQA. Residues 154–174 form a helical membrane-spanning segment; it reads RVTCVLIWVVGGLLSIPTFLL. The Extracellular portion of the chain corresponds to 175 to 206; the sequence is RSIQAVPDLNITACILLLPHEAWHFARIVELN. N-linked (GlcNAc...) asparagine glycosylation is present at Asn184. The helical transmembrane segment at 207 to 227 threads the bilayer; it reads ILAFLLPLAAIIFFNYHILAS. Residues 228–250 lie on the Cytoplasmic side of the membrane; that stretch reads LRGREEVSRTRCGGSKDSKTTAL. A helical transmembrane segment spans residues 251 to 271; that stretch reads ILTLVVAFLVCWAPYHFFAFL. The Extracellular segment spans residues 272–294; the sequence is EFLFQVQAVRGCFWEDFIDLGLQ. A helical transmembrane segment spans residues 295-315; sequence LANFLAFTNSSLNPVIYVFAG. The Cytoplasmic segment spans residues 316–352; sequence RLFRTKVWELYKQCTPKSLAPISSSHRKEIFQLFWRN. The S-palmitoyl cysteine moiety is linked to residue Cys329.

It belongs to the G-protein coupled receptor 1 family. Bradykinin receptor subfamily. BDKRB1 sub-subfamily.

The protein resides in the cell membrane. In terms of biological role, this is a receptor for bradykinin. Could be a factor in chronic pain and inflammation. This Macaca fascicularis (Crab-eating macaque) protein is B1 bradykinin receptor (BDKRB1).